We begin with the raw amino-acid sequence, 92 residues long: Bombyxin A-3 (92 aa).

The signal sequence occupies residues 1–19 (MKILLAIALMLSTVMWVST). Pyrrolidone carboxylic acid is present on Gln-20. Cystine bridges form between Cys-29-Cys-79, Cys-41-Cys-92, and Cys-78-Cys-83. The propeptide at 50–70 (SDAQYVSYGSAWLMPYSEGRG) is c peptide like.

Belongs to the insulin family. In terms of assembly, heterodimer of a B chain and an A chain linked by two disulfide bonds.

The protein resides in the secreted. In terms of biological role, brain peptide responsible for activation of prothoracic glands to produce ecdysone in insects. The sequence is that of Bombyxin A-3 (BBXA3) from Bombyx mori (Silk moth).